We begin with the raw amino-acid sequence, 321 residues long: Endoglucanase 1 (321 aa).

The signal sequence occupies residues 1–27 (MSRKLRTLMAALCALPLAFAAAPPAHA). The active site involves D110. Cysteines 112 and 156 form a disulfide. Residue D149 is the Proton donor of the active site. Catalysis depends on D295, which acts as the Nucleophile.

It belongs to the glycosyl hydrolase 6 (cellulase B) family.

It carries out the reaction Endohydrolysis of (1-&gt;4)-beta-D-glucosidic linkages in cellulose, lichenin and cereal beta-D-glucans.. In terms of biological role, implicated in the mechanism of induction exerted by cellobiose. The chain is Endoglucanase 1 (celA1) from Streptomyces halstedii.